Consider the following 123-residue polypeptide: Small ribosomal subunit protein uS12 (123 aa).

Aspartate 89 carries the post-translational modification 3-methylthioaspartic acid.

It belongs to the universal ribosomal protein uS12 family. Part of the 30S ribosomal subunit. Contacts proteins S8 and S17. May interact with IF1 in the 30S initiation complex.

With S4 and S5 plays an important role in translational accuracy. In terms of biological role, interacts with and stabilizes bases of the 16S rRNA that are involved in tRNA selection in the A site and with the mRNA backbone. Located at the interface of the 30S and 50S subunits, it traverses the body of the 30S subunit contacting proteins on the other side and probably holding the rRNA structure together. The combined cluster of proteins S8, S12 and S17 appears to hold together the shoulder and platform of the 30S subunit. The sequence is that of Small ribosomal subunit protein uS12 from Phenylobacterium zucineum (strain HLK1).